The sequence spans 127 residues: MKLMLETGLMFGEEAQLEVTMRELTTGDLLDAEMAAERLVMTPEGEAVLAKSPALFGYELLRRQIASVGKINGPISMRQLRSLTTEDLNRISLYAQSWESAKAEQVVSRGRLDTADQETGKDLSAVS.

A disordered region spans residues 107-127 (VSRGRLDTADQETGKDLSAVS). Over residues 110-121 (GRLDTADQETGK) the composition is skewed to basic and acidic residues.

To phage Mu protein gp41.

This Haemophilus influenzae (strain ATCC 51907 / DSM 11121 / KW20 / Rd) protein is Mu-like prophage FluMu protein gp41.